The sequence spans 494 residues: Cytochrome P450 71D94 (494 aa).

A helical; Signal-anchor for type II membrane protein transmembrane segment spans residues 1–21; that stretch reads MELNLLLVIIILVATYTVSLL. Residue Cys434 participates in heme binding.

Belongs to the cytochrome P450 family. It depends on heme as a cofactor.

It is found in the endoplasmic reticulum membrane. In terms of biological role, cytochrome P450 oxygenase of undefined substrate. Not active with limonene, (+)- or (-)-piperitone, (-)-isopiperitone, piperitenone or (+)-pulegone. In Mentha gracilis (Gingermint), this protein is Cytochrome P450 71D94 (CYP71D94).